We begin with the raw amino-acid sequence, 422 residues long: Phosphoglycerate kinase (422 aa).

Substrate-binding positions include 24 to 26 (DLN), 64 to 67 (HLGR), Arg129, and Arg171. ATP-binding positions include Lys222, Gly309, Glu340, and 370 to 373 (DIDT).

The protein belongs to the phosphoglycerate kinase family. Monomer.

The protein localises to the cytoplasm. The catalysed reaction is (2R)-3-phosphoglycerate + ATP = (2R)-3-phospho-glyceroyl phosphate + ADP. Its pathway is carbohydrate degradation; glycolysis; pyruvate from D-glyceraldehyde 3-phosphate: step 2/5. The protein is Phosphoglycerate kinase (pgk) of Ureaplasma parvum serovar 3 (strain ATCC 700970).